The primary structure comprises 112 residues: Integration host factor subunit alpha (112 aa).

This sequence belongs to the bacterial histone-like protein family. Heterodimer of an alpha and a beta chain.

This protein is one of the two subunits of integration host factor, a specific DNA-binding protein that functions in genetic recombination as well as in transcriptional and translational control. The polypeptide is Integration host factor subunit alpha (Rhizobium rhizogenes (strain K84 / ATCC BAA-868) (Agrobacterium radiobacter)).